The chain runs to 569 residues: MGFLFGLFIGIAVSFGLVVAFARYSSVRSTRRADLAKTIAAFARMTVQDSRKLLPGDFYPSWVVFSQRQKLNWLNLELEKIWPYVNEAASELIKSSVEPVLEQYTPAMLASLKFSKFTLGTVAPQFTGVSILESESGPNGITMELEMQWDGNPKIVLDVKTLLGVSLPIEVKNIGFTGVFRLIFKPLVDEFPCFGALSYSLREKKGLDFTLKVIGGELTSIPGISDAIEETIRDAIEDSITWPVRKIIPILPGDYSDLELKPVGKLDVKVVQAKDLANKDMIGKSDPYAIVFIRPLPDRTKKTKTISNSLNPIWNEHFEFIVEDVSTQHLTVRVFDDEGVGSSQLIGAAQVPLNELVPGKVKDIWLKLVKDLEIQRDTKNRGQVQLELLYCPLGKEGGLKNPFNPDYSLTILEKVLKPESEDSDATDMKKLVTSKKKDVIVRGVLSVTVVAAEDLPAVDFMGKADAFVVITLKKSETKSKTRVVPDSLNPVWNQTFDFVVEDALHDLLTLEVWDHDKFGKDKIGRVIMTLTRVMLEGEFQEWFELDGAKSGKLCVHLKWTPRLKLRDAS.

A helical membrane pass occupies residues M1–F21. The SMP-LTD domain maps to Q67–L251. Residues E229–T531 are phospholipid binding. 2 consecutive C2 domains span residues R245 to L366 and T426 to F543. 5 residues coordinate Ca(2+): D459, D465, D514, D516, and D521.

Belongs to the synaptotagmin family. The cofactor is Ca(2+).

The protein localises to the membrane. Its function is as follows. May be involved in membrane trafficking. The polypeptide is Synaptotagmin-4 (SYT4) (Arabidopsis thaliana (Mouse-ear cress)).